Consider the following 147-residue polypeptide: MGHFTEEDKATITSLWGKVNVEDAGGETLGRLLVVYPWTQRFFDSFGNLSSASAIMGNPKVKAHGKKVLTSLGDAIKHLDDLKGTFAQLSELHCDKLHVDPENFKLLGNVLVTVLAIHFGKEFTPEVQASWQKMVTAVASALSSRYH.

Gly2 is modified (N-acetylglycine). Residues 3–147 (HFTEEDKATI…VASALSSRYH (145 aa)) enclose the Globin domain. Residue Thr13 is modified to Phosphothreonine. 3 positions are modified to phosphoserine: Ser45, Ser51, and Ser53. An N6-acetyllysine modification is found at Lys60. His64 serves as a coordination point for heme b. At Lys83 the chain carries N6-acetyllysine. Position 93 (His93) interacts with heme b. Cys94 is subject to S-nitrosocysteine. The residue at position 140 (Ser140) is a Phosphoserine.

Belongs to the globin family. In terms of assembly, heterotetramer of two alpha chains and two gamma chains in fetal hemoglobin (Hb F). The ratio of gamma-G to gamma-A chains in is approximately 2:1 in infant chimpanzee, and 1:2 in the adult. As to expression, red blood cells.

Gamma chains make up the fetal hemoglobin F, in combination with alpha chains. This is Hemoglobin subunit gamma-1 (HBG1) from Pan troglodytes (Chimpanzee).